The chain runs to 870 residues: Leucine--tRNA ligase (870 aa).

Residues 55–65 (PYPSGTLHMGH) carry the 'HIGH' region motif. The 'KMSKS' region motif lies at 626 to 630 (KMSKS). Residue Lys-629 coordinates ATP.

The protein belongs to the class-I aminoacyl-tRNA synthetase family.

The protein localises to the cytoplasm. The catalysed reaction is tRNA(Leu) + L-leucine + ATP = L-leucyl-tRNA(Leu) + AMP + diphosphate. The sequence is that of Leucine--tRNA ligase from Prochlorococcus marinus (strain SARG / CCMP1375 / SS120).